Consider the following 205-residue polypeptide: Holliday junction branch migration complex subunit RuvA (205 aa).

The segment at Met1–Ile64 is domain I. Residues Thr65–Glu143 form a domain II region. The segment at Arg144–Pro156 is flexible linker. The domain III stretch occupies residues Thr157–Leu205.

Belongs to the RuvA family. As to quaternary structure, homotetramer. Forms an RuvA(8)-RuvB(12)-Holliday junction (HJ) complex. HJ DNA is sandwiched between 2 RuvA tetramers; dsDNA enters through RuvA and exits via RuvB. An RuvB hexamer assembles on each DNA strand where it exits the tetramer. Each RuvB hexamer is contacted by two RuvA subunits (via domain III) on 2 adjacent RuvB subunits; this complex drives branch migration. In the full resolvosome a probable DNA-RuvA(4)-RuvB(12)-RuvC(2) complex forms which resolves the HJ.

Its subcellular location is the cytoplasm. Its function is as follows. The RuvA-RuvB-RuvC complex processes Holliday junction (HJ) DNA during genetic recombination and DNA repair, while the RuvA-RuvB complex plays an important role in the rescue of blocked DNA replication forks via replication fork reversal (RFR). RuvA specifically binds to HJ cruciform DNA, conferring on it an open structure. The RuvB hexamer acts as an ATP-dependent pump, pulling dsDNA into and through the RuvAB complex. HJ branch migration allows RuvC to scan DNA until it finds its consensus sequence, where it cleaves and resolves the cruciform DNA. The polypeptide is Holliday junction branch migration complex subunit RuvA (Shewanella baltica (strain OS223)).